A 750-amino-acid polypeptide reads, in one-letter code: Photosystem I P700 chlorophyll a apoprotein A1 (750 aa).

8 consecutive transmembrane segments (helical) span residues 70–93 (VFSAHFGQLSIIFLWLSGMYFHGA), 156–179 (LYCTAIGALVFAGLMLFAGWFHYH), 195–219 (LNHHLAGLLGLGSLSWAGHQVHVSL), 291–309 (IVHHHLAIAILFLIAGHMY), 346–369 (WHAQLSLNLAMLGSLTIVVAHHMY), 385–411 (LSLFTHHMWIGGFLIVGAAAHAAIFMV), 433–455 (AIISHLNWACIFLGFHSFGLYIH), and 531–549 (FLVHHIHAFTIHVTVLILL). Cys573 and Cys582 together coordinate [4Fe-4S] cluster. Transmembrane regions (helical) follow at residues 589-610 (HVFLGLFWMYNAISVVIFHFSW) and 664-686 (LSAYGLFFLGAHFVWAFSLMFLF). A chlorophyll a'-binding site is contributed by His675. Chlorophyll a-binding residues include Met683 and Tyr691. Trp692 provides a ligand contact to phylloquinone. The helical transmembrane segment at 724–744 (AVGVTHYLLGGIATTWAFFLA) threads the bilayer.

It belongs to the PsaA/PsaB family. The PsaA/B heterodimer binds the P700 chlorophyll special pair and subsequent electron acceptors. PSI consists of a core antenna complex that captures photons, and an electron transfer chain that converts photonic excitation into a charge separation. The eukaryotic PSI reaction center is composed of at least 11 subunits. It depends on P700 is a chlorophyll a/chlorophyll a' dimer, A0 is one or more chlorophyll a, A1 is one or both phylloquinones and FX is a shared 4Fe-4S iron-sulfur center. as a cofactor.

The protein localises to the plastid. Its subcellular location is the chloroplast thylakoid membrane. The catalysed reaction is reduced [plastocyanin] + hnu + oxidized [2Fe-2S]-[ferredoxin] = oxidized [plastocyanin] + reduced [2Fe-2S]-[ferredoxin]. PsaA and PsaB bind P700, the primary electron donor of photosystem I (PSI), as well as the electron acceptors A0, A1 and FX. PSI is a plastocyanin-ferredoxin oxidoreductase, converting photonic excitation into a charge separation, which transfers an electron from the donor P700 chlorophyll pair to the spectroscopically characterized acceptors A0, A1, FX, FA and FB in turn. Oxidized P700 is reduced on the lumenal side of the thylakoid membrane by plastocyanin. The protein is Photosystem I P700 chlorophyll a apoprotein A1 of Piper cenocladum (Ant piper).